Reading from the N-terminus, the 407-residue chain is Aminomethyltransferase, mitochondrial (407 aa).

A mitochondrion-targeting transit peptide spans 1–29; the sequence is MRGGLWQVGQSITRRLGQSDKKTIVRRWY. Glutamate 234, arginine 265, and tyrosine 403 together coordinate substrate.

The protein belongs to the GcvT family. The glycine cleavage system is composed of four proteins: P, T, L and H.

The protein resides in the mitochondrion. The enzyme catalyses N(6)-[(R)-S(8)-aminomethyldihydrolipoyl]-L-lysyl-[protein] + (6S)-5,6,7,8-tetrahydrofolate = N(6)-[(R)-dihydrolipoyl]-L-lysyl-[protein] + (6R)-5,10-methylene-5,6,7,8-tetrahydrofolate + NH4(+). The glycine cleavage system catalyzes the degradation of glycine. The protein is Aminomethyltransferase, mitochondrial (GDCST) of Flaveria trinervia (Clustered yellowtops).